The chain runs to 143 residues: Large ribosomal subunit protein uL11 (143 aa).

It belongs to the universal ribosomal protein uL11 family. As to quaternary structure, part of the ribosomal stalk of the 50S ribosomal subunit. Interacts with L10 and the large rRNA to form the base of the stalk. L10 forms an elongated spine to which L12 dimers bind in a sequential fashion forming a multimeric L10(L12)X complex. One or more lysine residues are methylated.

Its function is as follows. Forms part of the ribosomal stalk which helps the ribosome interact with GTP-bound translation factors. The protein is Large ribosomal subunit protein uL11 of Rhizobium rhizogenes (strain K84 / ATCC BAA-868) (Agrobacterium radiobacter).